A 540-amino-acid polypeptide reads, in one-letter code: Probable protein kinase UbiB (540 aa).

Residues 24–44 form a helical membrane-spanning segment; the sequence is LLFEQPLLPWWLASLRLLMPW. The region spanning 126–494 is the Protein kinase domain; the sequence is RFDVEPLASA…RRRQGDRWAL (369 aa). ATP is bound by residues 132-140 and K154; that span reads LASASVAQV. The active-site Proton acceptor is the D289. The next 2 membrane-spanning stretches (helical) occupy residues 496–516 and 518–538; these read LLGA…AEAA and LAAP…YLIV.

It belongs to the ABC1 family. UbiB subfamily.

The protein resides in the cell inner membrane. It participates in cofactor biosynthesis; ubiquinone biosynthesis [regulation]. In terms of biological role, is probably a protein kinase regulator of UbiI activity which is involved in aerobic coenzyme Q (ubiquinone) biosynthesis. This Pseudomonas putida (strain GB-1) protein is Probable protein kinase UbiB.